A 910-amino-acid chain; its full sequence is Protein translocase subunit SecA (910 aa).

ATP-binding positions include glutamine 89, 107 to 111 (GEGKT), and aspartate 496. The interval 873–910 (QEFSGGNLNRSQSNGSSVTVTTSSGGGTERKTSRRRKR) is disordered. Over residues 876–886 (SGGNLNRSQSN) the composition is skewed to polar residues.

The protein belongs to the SecA family. In terms of assembly, monomer and homodimer. Part of the essential Sec protein translocation apparatus which comprises SecA, SecYEG and auxiliary proteins SecDF. Other proteins may also be involved.

It is found in the cell inner membrane. Its subcellular location is the cytoplasm. It catalyses the reaction ATP + H2O + cellular proteinSide 1 = ADP + phosphate + cellular proteinSide 2.. In terms of biological role, part of the Sec protein translocase complex. Interacts with the SecYEG preprotein conducting channel. Has a central role in coupling the hydrolysis of ATP to the transfer of proteins into and across the cell membrane, serving as an ATP-driven molecular motor driving the stepwise translocation of polypeptide chains across the membrane. The chain is Protein translocase subunit SecA from Leptospira interrogans serogroup Icterohaemorrhagiae serovar copenhageni (strain Fiocruz L1-130).